The following is a 364-amino-acid chain: 3-isopropylmalate dehydrogenase (364 aa).

Residue 76-89 (GPKWDGNAPEKRPE) coordinates NAD(+). The substrate site is built by R96, R106, R134, and D223. Residues D223, D247, and D251 each contribute to the Mg(2+) site. 281-293 (GSAPDIAGTGAAN) serves as a coordination point for NAD(+).

Belongs to the isocitrate and isopropylmalate dehydrogenases family. LeuB type 1 subfamily. Homodimer. Mg(2+) is required as a cofactor. It depends on Mn(2+) as a cofactor.

It localises to the cytoplasm. It carries out the reaction (2R,3S)-3-isopropylmalate + NAD(+) = 4-methyl-2-oxopentanoate + CO2 + NADH. Its pathway is amino-acid biosynthesis; L-leucine biosynthesis; L-leucine from 3-methyl-2-oxobutanoate: step 3/4. Its function is as follows. Catalyzes the oxidation of 3-carboxy-2-hydroxy-4-methylpentanoate (3-isopropylmalate) to 3-carboxy-4-methyl-2-oxopentanoate. The product decarboxylates to 4-methyl-2 oxopentanoate. This is 3-isopropylmalate dehydrogenase from Shouchella clausii (strain KSM-K16) (Alkalihalobacillus clausii).